We begin with the raw amino-acid sequence, 195 residues long: MHSDDPQQLELLRVCRIGRAQGLKGEVTVQIFTDEPEYRFAPGAVLYTKDGEEEYVVESSRTFKNRWIIKFEGIDDRDASEAANGVVLYGEADDPEEMLEADEWYPKDLISLEARLAEGNTLGLAPGTVVGKVVDVIEVAQWLLKIRLANPVKDADGVVVENSALVPFVDELVPDIDLEGGYLTLDPPGGLIPGL.

Positions 101–191 constitute a PRC barrel domain; that stretch reads ADEWYPKDLI…YLTLDPPGGL (91 aa).

Belongs to the RimM family. In terms of assembly, binds ribosomal protein uS19.

It localises to the cytoplasm. In terms of biological role, an accessory protein needed during the final step in the assembly of 30S ribosomal subunit, possibly for assembly of the head region. Essential for efficient processing of 16S rRNA. May be needed both before and after RbfA during the maturation of 16S rRNA. It has affinity for free ribosomal 30S subunits but not for 70S ribosomes. This is Ribosome maturation factor RimM from Bifidobacterium adolescentis (strain ATCC 15703 / DSM 20083 / NCTC 11814 / E194a).